The following is a 153-amino-acid chain: Prostaglandin E synthase (153 aa).

Residues 1–13 (MPSPGLVMESGQV) lie on the Lumenal side of the membrane. Residues 14 to 42 (LPAFLLCSTLLVIKMYAVAVITGQMRLRK) form a helical membrane-spanning segment. Position 39 (Arg-39) interacts with glutathione. Residues 43–61 (KAFANPEDALKRGGLQYYR) lie on the Cytoplasmic side of the membrane. A helical membrane pass occupies residues 62-91 (SDPDVERCLRAHRNDMETIYPFLFLGFVYS). A glutathione-binding site is contributed by 74-78 (RNDME). The Lumenal portion of the chain corresponds to 92 to 96 (FLGPN). A helical transmembrane segment spans residues 97-120 (PLIAWIHFLVVLTGRVVHTVAYLG). Residues His-114 and Tyr-118 each coordinate glutathione. The Cytoplasmic portion of the chain corresponds to 121 to 124 (KLNP). Residues 125 to 153 (RLRSGAYVLAQFSCFSMALQILWEVAHHL) traverse the membrane as a helical segment. Position 127-131 (127-131 (RSGAY)) interacts with glutathione.

It belongs to the MAPEG family. In terms of assembly, homotrimer. Requires glutathione as cofactor.

The protein resides in the membrane. The protein localises to the cytoplasm. Its subcellular location is the perinuclear region. It catalyses the reaction prostaglandin H2 = prostaglandin E2. It carries out the reaction 2-glyceryl-prostaglandin H2 = 2-glyceryl-prostaglandin E2. The catalysed reaction is prostaglandin G2 = (15S)-15-hydroperoxy-prostaglandin E2. The enzyme catalyses 1-chloro-2,4-dinitrobenzene + glutathione = 2,4-dinitrophenyl-S-glutathione + chloride + H(+). It catalyses the reaction (5S)-hydroperoxy-(6E,8Z,11Z,14Z)-eicosatetraenoate + 2 glutathione = (5S)-hydroxy-(6E,8Z,11Z,14Z)-eicosatetraenoate + glutathione disulfide + H2O. It participates in lipid metabolism; prostaglandin biosynthesis. Activity is increased markedly in macrophages and osteoblasts following pro-inflammatory stimuli. In terms of biological role, terminal enzyme of the cyclooxygenase (COX)-2-mediated prostaglandin E2 (PGE2) biosynthetic pathway. Catalyzes the glutathione-dependent oxidoreduction of prostaglandin endoperoxide H2 (PGH2) to prostaglandin E2 (PGE2) in response to inflammatory stimuli. Plays a key role in inflammation response, fever and pain. Also catalyzes the oxidoreduction of endocannabinoids into prostaglandin glycerol esters and PGG2 into 15-hydroperoxy-PGE2. In addition, displays low glutathione transferase and glutathione-dependent peroxidase activities, toward 1-chloro-2,4-dinitrobenzene and 5-hydroperoxyicosatetraenoic acid (5-HPETE), respectively. This Mus musculus (Mouse) protein is Prostaglandin E synthase (Ptges).